A 427-amino-acid polypeptide reads, in one-letter code: 3-phosphoshikimate 1-carboxyvinyltransferase (427 aa).

3-phosphoshikimate-binding residues include Lys22, Ser23, and Arg27. Lys22 lines the phosphoenolpyruvate pocket. 2 residues coordinate phosphoenolpyruvate: Gly96 and Arg124. Ser170, Ser171, Gln172, Ser198, Asp313, Asn336, and Lys340 together coordinate 3-phosphoshikimate. Gln172 contributes to the phosphoenolpyruvate binding site. Asp313 (proton acceptor) is an active-site residue. 3 residues coordinate phosphoenolpyruvate: Arg344, Arg386, and Lys411.

Belongs to the EPSP synthase family. Monomer.

It localises to the cytoplasm. It carries out the reaction 3-phosphoshikimate + phosphoenolpyruvate = 5-O-(1-carboxyvinyl)-3-phosphoshikimate + phosphate. It functions in the pathway metabolic intermediate biosynthesis; chorismate biosynthesis; chorismate from D-erythrose 4-phosphate and phosphoenolpyruvate: step 6/7. Functionally, catalyzes the transfer of the enolpyruvyl moiety of phosphoenolpyruvate (PEP) to the 5-hydroxyl of shikimate-3-phosphate (S3P) to produce enolpyruvyl shikimate-3-phosphate and inorganic phosphate. This is 3-phosphoshikimate 1-carboxyvinyltransferase from Aeromonas salmonicida (strain A449).